Here is a 115-residue protein sequence, read N- to C-terminus: NAD(P)H-quinone oxidoreductase subunit M (115 aa).

The protein belongs to the complex I NdhM subunit family. NDH-1 can be composed of about 15 different subunits; different subcomplexes with different compositions have been identified which probably have different functions.

The protein resides in the cellular thylakoid membrane. The catalysed reaction is a plastoquinone + NADH + (n+1) H(+)(in) = a plastoquinol + NAD(+) + n H(+)(out). It catalyses the reaction a plastoquinone + NADPH + (n+1) H(+)(in) = a plastoquinol + NADP(+) + n H(+)(out). Its function is as follows. NDH-1 shuttles electrons from an unknown electron donor, via FMN and iron-sulfur (Fe-S) centers, to quinones in the respiratory and/or the photosynthetic chain. The immediate electron acceptor for the enzyme in this species is believed to be plastoquinone. Couples the redox reaction to proton translocation, and thus conserves the redox energy in a proton gradient. Cyanobacterial NDH-1 also plays a role in inorganic carbon-concentration. In Prochlorococcus marinus (strain AS9601), this protein is NAD(P)H-quinone oxidoreductase subunit M.